We begin with the raw amino-acid sequence, 687 residues long: Polyphosphate kinase (687 aa).

Asn-45 serves as a coordination point for ATP. Positions 375 and 405 each coordinate Mg(2+). Residue His-435 is the Phosphohistidine intermediate of the active site. ATP-binding residues include Tyr-472, Arg-568, and His-596.

This sequence belongs to the polyphosphate kinase 1 (PPK1) family. Mg(2+) is required as a cofactor. Post-translationally, an intermediate of this reaction is the autophosphorylated ppk in which a phosphate is covalently linked to a histidine residue through a N-P bond.

It carries out the reaction [phosphate](n) + ATP = [phosphate](n+1) + ADP. Functionally, catalyzes the reversible transfer of the terminal phosphate of ATP to form a long-chain polyphosphate (polyP). The sequence is that of Polyphosphate kinase from Burkholderia ambifaria (strain ATCC BAA-244 / DSM 16087 / CCUG 44356 / LMG 19182 / AMMD) (Burkholderia cepacia (strain AMMD)).